Here is a 516-residue protein sequence, read N- to C-terminus: L-amino-acid oxidase (516 aa).

An N-terminal signal peptide occupies residues 1–18; sequence MNVFFMFSLLFLAALGSC. C28 and C191 are disulfide-bonded. FAD contacts are provided by residues 61 to 62, 81 to 82, R89, and 105 to 108; these read MA, EA, and GPMR. Residue R108 coordinates substrate. Residue N190 is glycosylated (N-linked (GlcNAc...) (complex) asparagine). Residue H241 participates in substrate binding. Residue V279 participates in FAD binding. C349 and C430 are oxidised to a cystine. An N-linked (GlcNAc...) (complex) asparagine glycan is attached at N379. Y390 provides a ligand contact to substrate. FAD contacts are provided by residues E475 and 482–487; that span reads GWIDST. 482-483 is a binding site for substrate; sequence GW.

As to quaternary structure, homodimer; non-covalently linked. It depends on FAD as a cofactor. Post-translationally, N-glycosylated at Asn-190 and Asn-379 with bis-sialylated, biantennary, core-fucosylated dodecasaccharide (composed of N-acetylglucosamine, fucose, mannose, galactose, and sialic acid residues). Expressed by the venom gland.

It is found in the secreted. It catalyses the reaction an L-alpha-amino acid + O2 + H2O = a 2-oxocarboxylate + H2O2 + NH4(+). It carries out the reaction L-leucine + O2 + H2O = 4-methyl-2-oxopentanoate + H2O2 + NH4(+). The catalysed reaction is L-phenylalanine + O2 + H2O = 3-phenylpyruvate + H2O2 + NH4(+). The enzyme catalyses L-tryptophan + O2 + H2O = indole-3-pyruvate + H2O2 + NH4(+). It catalyses the reaction L-methionine + O2 + H2O = 4-methylsulfanyl-2-oxobutanoate + H2O2 + NH4(+). It carries out the reaction L-isoleucine + O2 + H2O = (S)-3-methyl-2-oxopentanoate + H2O2 + NH4(+). The catalysed reaction is L-arginine + O2 + H2O = 5-guanidino-2-oxopentanoate + H2O2 + NH4(+). The enzyme catalyses L-aspartate + O2 + H2O = oxaloacetate + H2O2 + NH4(+). It catalyses the reaction L-histidine + O2 + H2O = 3-(imidazol-5-yl)pyruvate + H2O2 + NH4(+). It carries out the reaction L-2-aminohexanoate + O2 + H2O = 2-oxohexanoate + H2O2 + NH4(+). The catalysed reaction is L-2-aminopentanoate + O2 + H2O = 2-oxopentanoate + H2O2 + NH4(+). Catalyzes an oxidative deamination of predominantly hydrophobic and aromatic L-amino acids, thus producing hydrogen peroxide that may contribute to the diverse toxic effects of this enzyme. Shows high affinity for L-Phe, L-Trp, L-Met, L-Leu, and L-Ile, moderate affinity for L-Arg, L-Asp, and L-His, and very low affinity for L-Gln, L-Lys, and L-Ala. Also shows high activity on L-norleucine (L-2-aminohexanoate), and L-norvaline (L-2-aminopentanoate) and a weak activity on L-ornithine and L-aminobutyric acid. Also exhibits diverse biological activities, such as hemorrhage, hemolysis, edema, apoptosis of vascular endothelial cells or tumor cell lines, and antiparasitic activities, as well as regulation of platelet aggregation. Its effect on platelets is controversial, since it either induces aggregation or inhibits agonist-induced aggregation. These different effects are probably due to different experimental conditions. A possible explanation of high efficacy it that LAAO may bind to target cells through its sialylated glycan moiety that would bind to sialic acid-binding lectins (siglec) on target cells. This interaction may result in production of locally high concentrations of hydrogen peroxide in or near the binding interface, leading, in turn to oxidative damage of the siglec or another adjacent cell structural elements. The polypeptide is L-amino-acid oxidase (Calloselasma rhodostoma (Malayan pit viper)).